The primary structure comprises 302 residues: Lysosomal thioesterase PPT2 (302 aa).

The N-terminal stretch at 1 to 27 (MPGLWRQRLPSAWALLLLPFLPLLMPA) is a signal peptide. The N-linked (GlcNAc...) asparagine glycan is linked to asparagine 60. Disulfide bonds link cysteine 109–cysteine 117 and cysteine 165–cysteine 176. Residue serine 111 is the Nucleophile of the active site. 2 N-linked (GlcNAc...) asparagine glycosylation sites follow: asparagine 190 and asparagine 206. Aspartate 228 is a catalytic residue. Asparagine 245 carries an N-linked (GlcNAc...) asparagine glycan. Cysteine 276 and cysteine 296 are oxidised to a cystine. The active site involves histidine 283. A glycan (N-linked (GlcNAc...) asparagine) is linked at asparagine 289.

This sequence belongs to the palmitoyl-protein thioesterase family. In terms of tissue distribution, expressed throughout the brain, primarily in neurons, and at lower levels in glial cells.

It is found in the lysosome. It carries out the reaction hexadecanoyl-CoA + H2O = hexadecanoate + CoA + H(+). The enzyme catalyses S-hexadecanoyl-N-acetylcysteamine + H2O = N-acetylcysteamine + hexadecanoate + H(+). Functionally, catalyzes the cleavage of thioester bonds from S-palmitoyl-CoA or S-palmitoyl-N-acetylcysteamine (unbranched structures) but does not have activity against palmitoylcysteine or palmitoylated proteins, branched structures or bulky head groups. Conversely, hydrolyzes both long and short chain fatty acyl-CoA substrate. The protein is Lysosomal thioesterase PPT2 (Ppt2) of Mus musculus (Mouse).